A 529-amino-acid chain; its full sequence is Peptide chain release factor 3 (529 aa).

A tr-type G domain is found at 11 to 280; it reads SKRRTFAIIS…GLTDWAPAPL (270 aa). Residues 20–27, 88–92, and 142–145 each bind GTP; these read SHPDAGKT, DTPGH, and NKLD.

Belongs to the TRAFAC class translation factor GTPase superfamily. Classic translation factor GTPase family. PrfC subfamily.

The protein resides in the cytoplasm. Increases the formation of ribosomal termination complexes and stimulates activities of RF-1 and RF-2. It binds guanine nucleotides and has strong preference for UGA stop codons. It may interact directly with the ribosome. The stimulation of RF-1 and RF-2 is significantly reduced by GTP and GDP, but not by GMP. This chain is Peptide chain release factor 3, found in Vibrio vulnificus (strain CMCP6).